Reading from the N-terminus, the 411-residue chain is Probable protein S-acyltransferase 2 (411 aa).

Helical transmembrane passes span 56 to 76 and 85 to 105; these read LTTAMIGGPALTFCIRMVFLI and SLILLGALLLTVLDFTFLFLT. One can recognise a DHHC domain in the interval 160–210; sequence KFCDTCLLYRPPRASHCSICNNCVQRFDHHCPWVGQCIALRNYPYFICFIS. Cys190 (S-palmitoyl cysteine intermediate) is an active-site residue. 2 consecutive transmembrane segments (helical) span residues 205-225 and 245-265; these read FICFISTSTLLCLYVFVFSWV and FVVLILYCFVVVWFVGGLTVF. Ser405 carries the post-translational modification Phosphoserine.

The protein belongs to the DHHC palmitoyltransferase family. Expressed in flowers and pollen.

The protein resides in the cytoplasmic vesicle membrane. The catalysed reaction is L-cysteinyl-[protein] + hexadecanoyl-CoA = S-hexadecanoyl-L-cysteinyl-[protein] + CoA. In terms of biological role, palmitoyl acyltransferase. The protein is Probable protein S-acyltransferase 2 (PAT02) of Arabidopsis thaliana (Mouse-ear cress).